The primary structure comprises 922 residues: Alpha-actinin, sarcomeric (922 aa).

Positions 1-252 (MMENGGYVGQ…IMTYVSCYYH (252 aa)) are actin-binding. 2 Calponin-homology (CH) domains span residues 36–140 (KQQK…LRFA) and 149–255 (MTAK…HAFQ). Spectrin repeat units follow at residues 253-393 (AFQG…MVSD), 394-508 (ITNS…RCQR), 509-629 (ICDQ…SADL), and 630-742 (ISRK…TMET). EF-hand domains are found at residues 776 to 811 (EQLT…LGYS) and 817 to 852 (QGDM…ESTD). Residues aspartate 789, asparagine 791, threonine 793, arginine 795, and glutamate 800 each coordinate Ca(2+).

Belongs to the alpha-actinin family. Homodimer; antiparallel.

Functionally, F-actin cross-linking protein which is thought to anchor actin to a variety of intracellular structures. This is a bundling protein. The chain is Alpha-actinin, sarcomeric (Actn) from Anopheles gambiae (African malaria mosquito).